The following is a 172-amino-acid chain: Spermidine/spermine N(1)-acetyltransferase (172 aa).

In terms of domain architecture, N-acetyltransferase spans 3–172 (VKMKKCSRED…TDLIMAKTLI (170 aa)). Acetyl-CoA-binding positions include 96–98 (IYI), 105–109 (HGLGK), and 135–137 (NEN). Tyr-142 acts as the Proton donor in catalysis. Lys-144 contacts acetyl-CoA.

It belongs to the acetyltransferase family. In terms of assembly, monomer.

It catalyses the reaction an alkane-alpha,omega-diamine + acetyl-CoA = an N-acetylalkane-alpha,omega-diamine + CoA + H(+). Functionally, involved in the protection against polyamine toxicity by regulating their concentration. Could also be involved in the negative control of sporulation as well as production of degradative enzymes such as alpha-amylase, levansucrase and alkaline phosphatase. Catalyzes the transfer of an acetyl group from acetyl coenzyme A (AcCoA) to an acceptor substrate and releases both CoA and the acetylated product. It possesses N1-acetyltransferase activity toward polyamine substrates including spermidine, spermine, aminopropylcadaverine, norspermidine, homospermidine, N(8)-acetylspermidine, diaminopropane and agmatine. The protein is Spermidine/spermine N(1)-acetyltransferase of Bacillus subtilis (strain 168).